The sequence spans 430 residues: UDP-N-acetylglucosamine 1-carboxyvinyltransferase (430 aa).

22 to 23 (KN) contacts phosphoenolpyruvate. Arg102 lines the UDP-N-acetyl-alpha-D-glucosamine pocket. Cys126 serves as the catalytic Proton donor. 2-(S-cysteinyl)pyruvic acid O-phosphothioketal is present on Cys126. UDP-N-acetyl-alpha-D-glucosamine-binding positions include 131–135 (RPVDL), 172–175 (KVSV), Asp317, and Ile339.

Belongs to the EPSP synthase family. MurA subfamily.

It is found in the cytoplasm. The enzyme catalyses phosphoenolpyruvate + UDP-N-acetyl-alpha-D-glucosamine = UDP-N-acetyl-3-O-(1-carboxyvinyl)-alpha-D-glucosamine + phosphate. The protein operates within cell wall biogenesis; peptidoglycan biosynthesis. Functionally, cell wall formation. Adds enolpyruvyl to UDP-N-acetylglucosamine. The polypeptide is UDP-N-acetylglucosamine 1-carboxyvinyltransferase (Allorhizobium ampelinum (strain ATCC BAA-846 / DSM 112012 / S4) (Agrobacterium vitis (strain S4))).